A 581-amino-acid polypeptide reads, in one-letter code: Tricyclene synthase Oc15, chloroplastic (581 aa).

Residues 1 to 68 (MAFCISYVGA…ALCLNEHSLS (68 aa)) constitute a chloroplast transit peptide. 3 N-linked (GlcNAc...) asparagine glycosylation sites follow: Asn-27, Asn-206, and Asn-319. Asp-338 and Asp-342 together coordinate Mg(2+). The short motif at 338-342 (DDIFD) is the DDXXD motif element. N-linked (GlcNAc...) asparagine glycosylation is found at Asn-384 and Asn-465. 3 residues coordinate Mg(2+): Asn-482, Ser-486, and Glu-490. N-linked (GlcNAc...) asparagine glycosylation is present at Asn-509.

Belongs to the terpene synthase family. Tpsg subfamily. The cofactor is Mg(2+). Mn(2+) serves as cofactor. In terms of tissue distribution, accumulates in flowers; mostly expressed in both upper and lower petal lobes, and, to a lower extent, in tube and stamens.

It is found in the plastid. The protein localises to the chloroplast stroma. The catalysed reaction is (2E)-geranyl diphosphate = tricyclene + diphosphate. It catalyses the reaction (2E)-geranyl diphosphate = beta-myrcene + diphosphate. The protein operates within secondary metabolite biosynthesis; terpenoid biosynthesis. Its function is as follows. Contributes to floral scent emission. The polypeptide is Tricyclene synthase Oc15, chloroplastic (Oc15) (Antirrhinum majus (Garden snapdragon)).